Reading from the N-terminus, the 93-residue chain is Acylphosphatase (93 aa).

One can recognise an Acylphosphatase-like domain in the interval 7–93; it reads CLKAVISGKV…GEFRAFEILR (87 aa). Active-site residues include arginine 22 and asparagine 40.

It belongs to the acylphosphatase family.

The catalysed reaction is an acyl phosphate + H2O = a carboxylate + phosphate + H(+). The sequence is that of Acylphosphatase (acyP) from Acaryochloris marina (strain MBIC 11017).